Consider the following 486-residue polypeptide: Transcription factor VOZ1 (486 aa).

The segment at 208–405 (PPSAFLGPKC…VDGKKTSKGK (198 aa)) is VOZ. C217, C222, C236, and H240 together coordinate Zn(2+). Residues 217-240 (CALWDCPRPAQGFDWFQDYCSSFH) form a C3H1-type; atypical zinc finger. The interval 424–445 (EFPPENNTTNTTNNNKRCIKGR) is disordered. Residues 429-438 (NNTTNTTNNN) show a composition bias toward low complexity.

Homodimer. Interacts with phytochrome B (phyB). As to expression, ubiquitous. Expressed in the vascular bundles of various tissues, specifically in the phloem.

It is found in the cytoplasm. The protein resides in the nucleus. Functionally, transcriptional activator acting positively in the phytochrome B signaling pathway. Functions redundantly with VOZ2 to promote flowering downstream of phytochrome B (phyB). Down-regulates 'FLOWERING LOCUS C' (FLC) and up-regulates 'FLOWERING LOCUS T' (FT). Binds to the 38-bp cis-acting region of the AVP1 gene. Interacts with phyB in the cytoplasm and is translocated to the nucleus at signal transmission, where it is subjected to degradation in a phytochrome-dependent manner. The chain is Transcription factor VOZ1 (VOZ1) from Arabidopsis thaliana (Mouse-ear cress).